Reading from the N-terminus, the 360-residue chain is Putative F-box protein At1g65770 (360 aa).

The 49-residue stretch at 2 to 50 (ADWSTLPVDLLNMIAGRLFSNIELKRFRSICRSWRSSVPGAGKKNPFRT) folds into the F-box domain.

This chain is Putative F-box protein At1g65770, found in Arabidopsis thaliana (Mouse-ear cress).